Consider the following 279-residue polypeptide: Odontogenic ameloblast-associated protein (279 aa).

A signal peptide spans 1 to 15 (MKIIILLGFLGATLS). O-linked (GalNAc...) threonine glycosylation is found at Thr-115 and Thr-119. The tract at residues 127-129 (MPY) is interaction with ARHGEF5. Residues 243-263 (STSPKPSTTNVFTSAVDQTIT) are compositionally biased toward polar residues. The segment at 243 to 279 (STSPKPSTTNVFTSAVDQTITPELPEEKDKTDSLREP) is disordered. O-linked (GalNAc...) threonine glycosylation occurs at Thr-244. Residue Ser-249 is glycosylated (O-linked (GalNAc...) serine). 3 O-linked (GalNAc...) threonine glycosylation sites follow: Thr-250, Thr-251, and Thr-255. Ser-256 carries an O-linked (GalNAc...) serine glycan. Thr-261, Thr-263, and Thr-273 each carry an O-linked (GalNAc...) threonine glycan. The segment covering 267-279 (PEEKDKTDSLREP) has biased composition (basic and acidic residues). O-linked (GalNAc...) serine glycosylation occurs at Ser-275.

This sequence belongs to the ODAM family. In terms of assembly, interacts (via C-terminus) with ARHGEF5. O-glycosylated. As to expression, expressed in the junctional epithelium of healthy teeth. In periodontitis, absent in the pocket epithelium of the diseased periodontium but is detected in the gingival crevicular fluid.

The protein resides in the secreted. The protein localises to the cytoplasm. It localises to the nucleus. In terms of biological role, tooth-associated epithelia protein that probably plays a role in odontogenesis, the complex process that results in the initiation and generation of the tooth. May be incorporated in the enamel matrix at the end of mineralization process. Involved in the induction of RHOA activity via interaction with ARHGEF and expression of downstream factors such as ROCK. Plays a role in attachment of the junctional epithelium to the tooth surface. This is Odontogenic ameloblast-associated protein (ODAM) from Homo sapiens (Human).